A 727-amino-acid polypeptide reads, in one-letter code: Sodium-dependent neutral amino acid transporter SLC6A17 (727 aa).

Over 1 to 68 the chain is Cytoplasmic; that stretch reads MPKNSKVTQR…DRPAWNSKLQ (68 aa). S13 and S20 each carry phosphoserine. A helical membrane pass occupies residues 69 to 89; the sequence is YILAQIGFSVGLGNIWRFPYL. Over 90–96 the chain is Extracellular; sequence CQKNGGG. A helical transmembrane segment spans residues 97 to 116; it reads AYLVPYLVLLIIIGIPLFFL. The Cytoplasmic portion of the chain corresponds to 117-140; it reads ELAVGQRIRRGSIGVWHYVCPRLG. The chain crosses the membrane as a helical span at residues 141 to 161; that stretch reads GIGFSSCIVCLFVGLYYNVII. Residues 162–224 lie on the Extracellular side of the membrane; the sequence is GWSVFYFFKS…NSISESGGLN (63 aa). N186 carries N-linked (GlcNAc...) asparagine glycosylation. A helical transmembrane segment spans residues 225–243; sequence WKMTLCLLVAWSIVGMAVV. The Cytoplasmic segment spans residues 244–251; that stretch reads KGIQSSGK. Residues 252-269 form a helical membrane-spanning segment; it reads VMYFSSLFPYVVLACFLV. The Extracellular segment spans residues 270–304; it reads RGLLLRGAVDGILHMFTPKLDKMLDPQVWREAATQ. Residues 305 to 322 traverse the membrane as a helical segment; sequence VFFALGLGFGGVIAFSSY. The Cytoplasmic segment spans residues 323–333; the sequence is NKQDNNCHFDA. The chain crosses the membrane as a helical span at residues 334–355; that stretch reads ALVSFINFFTSVLATLVVFAVL. The Extracellular portion of the chain corresponds to 356-451; that stretch reads GFKANIMNEK…FIAFTEAMTH (96 aa). Y377 is subject to Phosphotyrosine. An N-linked (GlcNAc...) asparagine glycan is attached at N393. Residues 452-471 traverse the membrane as a helical segment; it reads FPASPFWSVMFFLMLINLGL. Topologically, residues 472 to 494 are cytoplasmic; sequence GSMIGTMAGITTPIIDTFKVPKE. A helical membrane pass occupies residues 495–513; that stretch reads MFTVGCCVFAFFVGLLFVQ. Topologically, residues 514–528 are extracellular; that stretch reads RSGNYFVTMFDDYSA. The helical transmembrane segment at 529 to 549 threads the bilayer; the sequence is TLPLTVIVILENIAVAWIYGT. The Cytoplasmic segment spans residues 550–569; sequence KKFMQELTEMLGFQPYRFYF. Residues 570–591 traverse the membrane as a helical segment; it reads YMWKFVSPLCMAVLTTASIIQL. Over 592–618 the chain is Extracellular; it reads GVSPPGYSAWIKEEAAERYLYFPNWAM. A helical membrane pass occupies residues 619–641; it reads ALLITLIAVATLPIPVVFILRHF. Topologically, residues 642–727 are cytoplasmic; that stretch reads HLLSDGSNTL…LLASTPESEL (86 aa). S665 and S701 each carry phosphoserine. Residues 680 to 727 form a disordered region; the sequence is VPSEAPSPMPTHRSYLGPGSTSPLDNSNNPNGRYGSGYLLASTPESEL. The span at 698–710 shows a compositional bias: polar residues; sequence GSTSPLDNSNNPN.

The protein belongs to the sodium:neurotransmitter symporter (SNF) (TC 2.A.22) family. Expressed in the brain. The strongest expression levels in embryonic, postnatal, and adult stages are found in both cortical and hippocampal tissues.

The protein resides in the cytoplasmic vesicle. It is found in the secretory vesicle. The protein localises to the synaptic vesicle membrane. Its subcellular location is the postsynapse. It localises to the presynapse. It carries out the reaction L-proline(in) + Na(+)(in) = L-proline(out) + Na(+)(out). The enzyme catalyses L-leucine(in) + Na(+)(in) = L-leucine(out) + Na(+)(out). The catalysed reaction is glycine(in) + Na(+)(in) = glycine(out) + Na(+)(out). It catalyses the reaction L-alanine(in) + Na(+)(in) = L-alanine(out) + Na(+)(out). It carries out the reaction L-glutamine(in) + Na(+)(in) = L-glutamine(out) + Na(+)(out). Its function is as follows. Synaptic vesicle transporter with apparent selectivity for neutral amino acids. The transport is sodium-coupled but chloride-independent, likely driven by the proton electrochemical gradient generated by vacuolar H(+)-ATPase in an overall electrogenic mechanism. May contribute to the synaptic uptake of neurotransmitter precursors in a process coupled in part to vesicle exocytosis. The chain is Sodium-dependent neutral amino acid transporter SLC6A17 from Mus musculus (Mouse).